Here is a 677-residue protein sequence, read N- to C-terminus: Methionine--tRNA ligase (677 aa).

A 'HIGH' region motif is present at residues 15 to 25 (PYANGSIHLGH). Positions 146, 149, 159, and 162 each coordinate Zn(2+). The 'KMSKS' region signature appears at 333 to 337 (KMSKS). Lys336 serves as a coordination point for ATP. In terms of domain architecture, tRNA-binding spans 575–677 (DFAKIDLRVA…DGAKPGQQVK (103 aa)).

This sequence belongs to the class-I aminoacyl-tRNA synthetase family. MetG type 1 subfamily. In terms of assembly, homodimer. Zn(2+) serves as cofactor.

The protein localises to the cytoplasm. It carries out the reaction tRNA(Met) + L-methionine + ATP = L-methionyl-tRNA(Met) + AMP + diphosphate. Is required not only for elongation of protein synthesis but also for the initiation of all mRNA translation through initiator tRNA(fMet) aminoacylation. The chain is Methionine--tRNA ligase from Salmonella paratyphi C (strain RKS4594).